An 89-amino-acid chain; its full sequence is Small ribosomal subunit protein uS15 (89 aa).

Over residues 1 to 16 (MSVADIKKQDIVKDNG) the composition is skewed to basic and acidic residues. Positions 1 to 24 (MSVADIKKQDIVKDNGRSANDTGS) are disordered.

The protein belongs to the universal ribosomal protein uS15 family. Part of the 30S ribosomal subunit. Forms a bridge to the 50S subunit in the 70S ribosome, contacting the 23S rRNA.

Functionally, one of the primary rRNA binding proteins, it binds directly to 16S rRNA where it helps nucleate assembly of the platform of the 30S subunit by binding and bridging several RNA helices of the 16S rRNA. In terms of biological role, forms an intersubunit bridge (bridge B4) with the 23S rRNA of the 50S subunit in the ribosome. In Ralstonia pickettii (strain 12J), this protein is Small ribosomal subunit protein uS15.